Here is a 248-residue protein sequence, read N- to C-terminus: uncharacterized protein (248 aa).

This is an uncharacterized protein from Escherichia coli (Bacteriophage T4).